We begin with the raw amino-acid sequence, 295 residues long: Translational activator of cytochrome c oxidase 1 (295 aa).

Position 162 is an N6-acetyllysine (K162). Residues 190–225 adopt a coiled-coil conformation; sequence VEDREKKAVNLERALELAIEAGAEDVREAEDEEEEK.

It belongs to the TACO1 family.

It is found in the mitochondrion. Acts as a translational activator of mitochondrially-encoded cytochrome c oxidase 1. This Rattus norvegicus (Rat) protein is Translational activator of cytochrome c oxidase 1.